The primary structure comprises 1893 residues: Protein TIC 214 (1893 aa).

Helical transmembrane passes span 18–38 (IINS…FSIG), 63–83 (AITG…YAPL), 87–107 (LGRP…HFFW), 127–147 (LSIQ…HFIL), 175–195 (VGWL…LVWI), and 224–244 (IFSI…PSPI). Basic and acidic residues-rich tracts occupy residues 249-258 (MKETSETEER) and 268-287 (EIER…RSTE). The tract at residues 249–317 (MKETSETEER…TEEIRVNGKE (69 aa)) is disordered. The segment covering 298–309 (EKEDPDKIDETE) has biased composition (acidic residues). The chain crosses the membrane as a helical span at residues 1126–1146 (LHYFIKFFIERIYIDILLCLI).

The protein belongs to the TIC214 family. As to quaternary structure, part of the Tic complex.

The protein localises to the plastid. The protein resides in the chloroplast inner membrane. Its function is as follows. Involved in protein precursor import into chloroplasts. May be part of an intermediate translocation complex acting as a protein-conducting channel at the inner envelope. This Vitis vinifera (Grape) protein is Protein TIC 214.